Here is a 130-residue protein sequence, read N- to C-terminus: Cytochrome c-type biogenesis protein CcmE (130 aa).

The Cytoplasmic portion of the chain corresponds to 1–7 (MKKKHKR). The chain crosses the membrane as a helical; Signal-anchor for type II membrane protein span at residues 8–28 (LLITSGIFCFLSCAVFFILTT). The Extracellular portion of the chain corresponds to 29–130 (LKENISFFYT…DENYKPKVLK (102 aa)). 2 residues coordinate heme: His120 and Tyr124.

Belongs to the CcmE/CycJ family.

The protein resides in the cell membrane. Its function is as follows. Heme chaperone required for the biogenesis of c-type cytochromes. Transiently binds heme delivered by CcmC and transfers the heme to apo-cytochromes in a process facilitated by CcmF and CcmH. This chain is Cytochrome c-type biogenesis protein CcmE, found in Wolbachia pipientis subsp. Culex pipiens (strain wPip).